A 149-amino-acid chain; its full sequence is Protein E6 (149 aa).

Zinc fingers lie at residues 30–66 (CVEC…CKLC) and 103–139 (CIIC…CAAC). The PDZ-binding domain signature appears at 147-149 (TAL).

This sequence belongs to the papillomaviridae E6 protein family. In terms of assembly, forms homodimers. Interacts with ubiquitin-protein ligase UBE3A/E6-AP and thus forms a complex with human TP53. Interacts with human NFX1 and MAGI3. Interacts with human IRF3; this interaction inhibits the establishment of antiviral state. Interacts with human TYK2; this interaction inhibits JAK-STAT activation by interferon alpha. Interacts with host DLG1; this interaction leads to the proteasomal degradation of DLG1.

It localises to the host cytoplasm. Its subcellular location is the host nucleus. In terms of biological role, this protein may be involved in the oncogenic potential of this virus (cervical neoplasia-associated virus). Functionally, plays a major role in the induction and maintenance of cellular transformation. Acts mainly as an oncoprotein by stimulating the destruction of many host cell key regulatory proteins. E6 associates with host UBE3A/E6-AP ubiquitin-protein ligase, and inactivates tumor suppressors TP53 and TP73 by targeting them to the 26S proteasome for degradation. In turn, DNA damage and chromosomal instabilities increase and lead to cell proliferation and cancer development. The complex E6/E6AP targets several other substrates to degradation via the proteasome including host DLG1 or NFX1, a repressor of human telomerase reverse transcriptase (hTERT). The resulting increased expression of hTERT prevents the shortening of telomere length leading to cell immortalization. Other cellular targets including BAK1, Fas-associated death domain-containing protein (FADD) and procaspase 8, are degraded by E6/E6AP causing inhibition of apoptosis. E6 also inhibits immune response by interacting with host IRF3 and TYK2. These interactions prevent IRF3 transcriptional activities and inhibit TYK2-mediated JAK-STAT activation by interferon alpha resulting in inhibition of the interferon signaling pathway. This Homo sapiens (Human) protein is Protein E6.